The chain runs to 692 residues: Methionine--tRNA ligase (692 aa).

The 'HIGH' region signature appears at 12–22 (PYANGPLHLGH). Positions 143, 146, 156, and 159 each coordinate Zn(2+). The 'KMSKS' region signature appears at 330-334 (KMSKS). Lys333 is an ATP binding site. Over residues 554–563 (AAAAPAAKPA) the composition is skewed to low complexity. The disordered stretch occupies residues 554 to 575 (AAAAPAAKPAAPAPAPAPAKDE). In terms of domain architecture, tRNA-binding spans 589-692 (DFAKLDLRIG…SGAQPGMPVR (104 aa)).

Belongs to the class-I aminoacyl-tRNA synthetase family. MetG type 1 subfamily. In terms of assembly, homodimer. Zn(2+) is required as a cofactor.

It is found in the cytoplasm. The catalysed reaction is tRNA(Met) + L-methionine + ATP = L-methionyl-tRNA(Met) + AMP + diphosphate. In terms of biological role, is required not only for elongation of protein synthesis but also for the initiation of all mRNA translation through initiator tRNA(fMet) aminoacylation. This chain is Methionine--tRNA ligase, found in Stenotrophomonas maltophilia (strain K279a).